Consider the following 430-residue polypeptide: Glutamate-1-semialdehyde 2,1-aminomutase (430 aa).

K269 is subject to N6-(pyridoxal phosphate)lysine.

Belongs to the class-III pyridoxal-phosphate-dependent aminotransferase family. HemL subfamily. In terms of assembly, homodimer. The cofactor is pyridoxal 5'-phosphate.

Its subcellular location is the cytoplasm. The enzyme catalyses (S)-4-amino-5-oxopentanoate = 5-aminolevulinate. It functions in the pathway porphyrin-containing compound metabolism; protoporphyrin-IX biosynthesis; 5-aminolevulinate from L-glutamyl-tRNA(Glu): step 2/2. This is Glutamate-1-semialdehyde 2,1-aminomutase from Desulfitobacterium hafniense (strain Y51).